A 217-amino-acid polypeptide reads, in one-letter code: ATP phosphoribosyltransferase (217 aa).

Belongs to the ATP phosphoribosyltransferase family. Short subfamily. As to quaternary structure, heteromultimer composed of HisG and HisZ subunits.

Its subcellular location is the cytoplasm. It catalyses the reaction 1-(5-phospho-beta-D-ribosyl)-ATP + diphosphate = 5-phospho-alpha-D-ribose 1-diphosphate + ATP. The protein operates within amino-acid biosynthesis; L-histidine biosynthesis; L-histidine from 5-phospho-alpha-D-ribose 1-diphosphate: step 1/9. Catalyzes the condensation of ATP and 5-phosphoribose 1-diphosphate to form N'-(5'-phosphoribosyl)-ATP (PR-ATP). Has a crucial role in the pathway because the rate of histidine biosynthesis seems to be controlled primarily by regulation of HisG enzymatic activity. In Polaromonas naphthalenivorans (strain CJ2), this protein is ATP phosphoribosyltransferase.